Reading from the N-terminus, the 286-residue chain is ATP synthase gamma chain (286 aa).

This sequence belongs to the ATPase gamma chain family. As to quaternary structure, F-type ATPases have 2 components, CF(1) - the catalytic core - and CF(0) - the membrane proton channel. CF(1) has five subunits: alpha(3), beta(3), gamma(1), delta(1), epsilon(1). CF(0) has three main subunits: a, b and c.

The protein localises to the cell inner membrane. In terms of biological role, produces ATP from ADP in the presence of a proton gradient across the membrane. The gamma chain is believed to be important in regulating ATPase activity and the flow of protons through the CF(0) complex. The sequence is that of ATP synthase gamma chain from Leptospira borgpetersenii serovar Hardjo-bovis (strain JB197).